We begin with the raw amino-acid sequence, 640 residues long: Serine/threonine-protein kinase ELM1 (640 aa).

Positions glutamate 27–serine 47 are disordered. A compositionally biased stretch (low complexity) spans proline 35–serine 47. The Protein kinase domain occupies tyrosine 88–isoleucine 420. Residues alanine 94 to valine 102 and lysine 117 contribute to the ATP site. Residue serine 152 is modified to Phosphoserine. Aspartate 259 acts as the Proton acceptor in catalysis. Phosphoserine occurs at positions 516 and 519. Positions leucine 520–lysine 529 are enriched in polar residues. Disordered stretches follow at residues leucine 520–leucine 547 and serine 562–threonine 587. Residues glutamine 530–serine 541 show a composition bias toward basic and acidic residues. Over residues arginine 569–proline 579 the composition is skewed to polar residues.

The protein belongs to the protein kinase superfamily. Ser/Thr protein kinase family. The cofactor is Mg(2+).

It catalyses the reaction L-seryl-[protein] + ATP = O-phospho-L-seryl-[protein] + ADP + H(+). The catalysed reaction is L-threonyl-[protein] + ATP = O-phospho-L-threonyl-[protein] + ADP + H(+). Functionally, important role in G1 events required for bud emergence and septin organization. Coordinates cell growth and cell division at G2/M, essential for efficient cytokinesis and for regulation of SWE1. This chain is Serine/threonine-protein kinase ELM1 (ELM1), found in Saccharomyces cerevisiae (strain ATCC 204508 / S288c) (Baker's yeast).